Here is a 274-residue protein sequence, read N- to C-terminus: NH(3)-dependent NAD(+) synthetase (274 aa).

46–53 contacts ATP; that stretch reads GISGGQDS. Aspartate 52 is a Mg(2+) binding site. Position 140 (arginine 140) interacts with deamido-NAD(+). An ATP-binding site is contributed by threonine 160. Glutamate 165 contributes to the Mg(2+) binding site. The deamido-NAD(+) site is built by lysine 173 and aspartate 180. 2 residues coordinate ATP: lysine 189 and threonine 211. 260–261 contributes to the deamido-NAD(+) binding site; it reads HK.

Belongs to the NAD synthetase family. In terms of assembly, homodimer.

The enzyme catalyses deamido-NAD(+) + NH4(+) + ATP = AMP + diphosphate + NAD(+) + H(+). It functions in the pathway cofactor biosynthesis; NAD(+) biosynthesis; NAD(+) from deamido-NAD(+) (ammonia route): step 1/1. Catalyzes the ATP-dependent amidation of deamido-NAD to form NAD. Uses ammonia as a nitrogen source. This Streptococcus pneumoniae serotype 2 (strain D39 / NCTC 7466) protein is NH(3)-dependent NAD(+) synthetase.